Reading from the N-terminus, the 345-residue chain is Uroporphyrinogen decarboxylase (345 aa).

Substrate is bound by residues 28–32 (RQAGR), D77, Y153, S208, and H322.

This sequence belongs to the uroporphyrinogen decarboxylase family. As to quaternary structure, homodimer.

The protein resides in the cytoplasm. The enzyme catalyses uroporphyrinogen III + 4 H(+) = coproporphyrinogen III + 4 CO2. It participates in porphyrin-containing compound metabolism; protoporphyrin-IX biosynthesis; coproporphyrinogen-III from 5-aminolevulinate: step 4/4. Catalyzes the decarboxylation of four acetate groups of uroporphyrinogen-III to yield coproporphyrinogen-III. This Solibacter usitatus (strain Ellin6076) protein is Uroporphyrinogen decarboxylase.